Here is a 762-residue protein sequence, read N- to C-terminus: Ribosome-releasing factor 2, mitochondrial (762 aa).

Residues 1–35 (MLLSLTFPVLRGCTGHLVNRSLQAPRWRVTWKRSY) constitute a mitochondrion transit peptide. The region spanning 54–341 (SKIRNIGIMA…AITAYLPAPN (288 aa)) is the tr-type G domain. Residues 63–70 (AHIDAGKT), 127–131 (DTPGH), and 181–184 (NKMD) contribute to the GTP site.

Belongs to the TRAFAC class translation factor GTPase superfamily. Classic translation factor GTPase family. EF-G/EF-2 subfamily.

Its subcellular location is the mitochondrion. It carries out the reaction GTP + H2O = GDP + phosphate + H(+). Functionally, mitochondrial GTPase that mediates the disassembly of ribosomes from messenger RNA at the termination of mitochondrial protein biosynthesis. Acts in collaboration with mrrf. GTP hydrolysis follows the ribosome disassembly and probably occurs on the ribosome large subunit. Not involved in the GTP-dependent ribosomal translocation step during translation elongation. In Danio rerio (Zebrafish), this protein is Ribosome-releasing factor 2, mitochondrial (gfm2).